A 247-amino-acid chain; its full sequence is tRNA pseudouridine synthase A (247 aa).

D52 functions as the Nucleophile in the catalytic mechanism. Y113 is a binding site for substrate.

It belongs to the tRNA pseudouridine synthase TruA family. In terms of assembly, homodimer.

The enzyme catalyses uridine(38/39/40) in tRNA = pseudouridine(38/39/40) in tRNA. Formation of pseudouridine at positions 38, 39 and 40 in the anticodon stem and loop of transfer RNAs. The polypeptide is tRNA pseudouridine synthase A (Rhizobium meliloti (strain 1021) (Ensifer meliloti)).